The primary structure comprises 699 residues: MTTITEKRLTFAFPEDYYVTKYDEWEHYKIFQNSCNLRNKIDTNEKGKNGINQSVDDDNGSSGVDIIALHESTLWLIEIKDYYRLGLEPNAQSIDEKLSDLPYLIARKIRDSLAGLVSAKFKAEKQEEKDFSRLALDCNEIKIVLHIEMPSIRSKLYPSSSDLANLLKDKFKLSEFTKNFANCYAEPIFTNISHINNPQLRNVPWSVSTGTEQKLSSEQQRLIHNPMTTIYNTLTRQKEPFAPIDPKNVRMYVCGMTVYDYCHLGHARVMVVFDMIARWLRECGYPLTYVRNITDIDDKIIARAAENGETIGELTARFIQAMHEDADALGVLRPDIEPKATENIPQMIAMIETLIQNGKAYPAANGDVYYAVREFSAYGQLSGKSLDDLRAGERVEVDGFKRDPLDFVLWKAAKAGEPAWESPWGNGRPGWHIECSAMSENLFGNTFDIHGGGADLQFPHHENEIAQSVGATGHTCGHHHAQTHHGQSIASHVKYWLHNGFIRVDGEKMSKSLGNFFTIREVLKQYDPEVVRFFILRAHYRSPLNYSDAHLDDAKGALTRLYTTLKNTPAAEFDLSENVNDYTRRFYAAMNDDFGTVEAVAVLFELAGEVNKTNDAQLAGCLKALGGIIGLLQRDPTEFLQGGAASDGLSNEEIEDLIARRKQARADKNWAESDRIRDLLNEHKIILEDNAGGTTWRRG.

Positions 1–226 are unknown; it reads MTTITEKRLT…SEQQRLIHNP (226 aa). Cysteine 254 lines the Zn(2+) pocket. The 'HIGH' region signature appears at 256-266; the sequence is MTVYDYCHLGH. Zn(2+) contacts are provided by cysteine 435, histidine 460, and glutamate 464. Positions 508-512 match the 'KMSKS' region motif; it reads KMSKS. Lysine 511 contacts ATP.

It belongs to the class-I aminoacyl-tRNA synthetase family. As to quaternary structure, monomer. Requires Zn(2+) as cofactor.

It is found in the cytoplasm. The catalysed reaction is tRNA(Cys) + L-cysteine + ATP = L-cysteinyl-tRNA(Cys) + AMP + diphosphate. This chain is Cysteine--tRNA ligase (cysS), found in Neisseria meningitidis serogroup A / serotype 4A (strain DSM 15465 / Z2491).